Reading from the N-terminus, the 495-residue chain is Putative aldehyde dehydrogenase AldA (495 aa).

212–218 (GKGSESG) serves as a coordination point for NAD(+). Active-site residues include Glu256 and Cys290.

The protein belongs to the aldehyde dehydrogenase family.

The catalysed reaction is an aldehyde + NAD(+) + H2O = a carboxylate + NADH + 2 H(+). The protein is Putative aldehyde dehydrogenase AldA (aldA) of Staphylococcus aureus (strain Mu50 / ATCC 700699).